Reading from the N-terminus, the 154-residue chain is Endoribonuclease YbeY (154 aa).

Positions 118, 122, and 128 each coordinate Zn(2+).

It belongs to the endoribonuclease YbeY family. Zn(2+) serves as cofactor.

It localises to the cytoplasm. Functionally, single strand-specific metallo-endoribonuclease involved in late-stage 70S ribosome quality control and in maturation of the 3' terminus of the 16S rRNA. The protein is Endoribonuclease YbeY of Macrococcus caseolyticus (strain JCSC5402) (Macrococcoides caseolyticum).